A 138-amino-acid polypeptide reads, in one-letter code: Acidic phospholipase A2 1 (138 aa).

The first 16 residues, 1 to 16 (MRTLWIMAVLLVGVEG), serve as a signal peptide directing secretion. 7 disulfides stabilise this stretch: Cys-42-Cys-131, Cys-44-Cys-60, Cys-59-Cys-111, Cys-65-Cys-138, Cys-66-Cys-104, Cys-73-Cys-97, and Cys-91-Cys-102. Residues Phe-43, Gly-45, and Gly-47 each coordinate Ca(2+). His-63 is a catalytic residue. Asp-64 provides a ligand contact to Ca(2+). The active site involves Asp-105.

Belongs to the phospholipase A2 family. Group II subfamily. D49 sub-subfamily. It depends on Ca(2+) as a cofactor. In terms of tissue distribution, expressed by the venom gland.

The protein resides in the secreted. The enzyme catalyses a 1,2-diacyl-sn-glycero-3-phosphocholine + H2O = a 1-acyl-sn-glycero-3-phosphocholine + a fatty acid + H(+). In terms of biological role, snake venom phospholipase A2 (PLA2) that has high lipolytic activity. PLA2 catalyzes the calcium-dependent hydrolysis of the 2-acyl groups in 3-sn-phosphoglycerides. This chain is Acidic phospholipase A2 1, found in Craspedocephalus gramineus (Bamboo pit viper).